Consider the following 320-residue polypeptide: Olfactory receptor 2T12 (320 aa).

Topologically, residues 1-23 (MEMRNTTPDFILLGLFNHTRAHQ) are extracellular. N17 is a glycosylation site (N-linked (GlcNAc...) asparagine). Residues 24–47 (VLFMMLLATVLTSLFSNALMILLI) form a helical membrane-spanning segment. At 48–55 (HWDHRLHR) the chain is on the cytoplasmic side. A helical transmembrane segment spans residues 56 to 77 (PMYFLLSQLSLMDMMLVSTTVP). Over 78-98 (KMAADYLTGNKAISRAGCGVQ) the chain is Extracellular. A disulfide bond links C95 and C187. A helical transmembrane segment spans residues 99–118 (IFFLPTLGGGECFLLAAMAY). Topologically, residues 119-137 (DRYAAVCHPLRYPTLMSWQ) are cytoplasmic. A helical transmembrane segment spans residues 138–156 (LCLRMTMSSWLLGAADGLL). The Extracellular segment spans residues 157 to 193 (QAVATLSFPYCGAHEIDHFFCEAPVLVRLACADTSVF). Residues 194–217 (ENAMYICCVLMLLVPFSLILSSYG) form a helical membrane-spanning segment. At 218–234 (LILAAVLLMRSTEARKK) the chain is on the cytoplasmic side. The helical transmembrane segment at 235-257 (AFATCSSHVAVVGLFYGAGIFTY) threads the bilayer. Residues 258–270 (MRPKSHRSTNHDK) lie on the Extracellular side of the membrane. The helical transmembrane segment at 271–290 (VVSAFYTMFTPLLNPLIYSV) threads the bilayer. At 291 to 320 (RNSEVKEALKRWLGTCVNLKHQQNEAHRSR) the chain is on the cytoplasmic side.

The protein belongs to the G-protein coupled receptor 1 family.

Its subcellular location is the cell membrane. Odorant receptor. The sequence is that of Olfactory receptor 2T12 (OR2T12) from Homo sapiens (Human).